The sequence spans 819 residues: DNA topoisomerase 4 subunit A (819 aa).

The Topo IIA-type catalytic domain occupies 30–496; the sequence is LPDIRDGLKP…QIIEIDTASL (467 aa). The O-(5'-phospho-DNA)-tyrosine intermediate role is filled by Tyr-118.

Belongs to the type II topoisomerase GyrA/ParC subunit family. ParC type 2 subfamily. Heterotetramer composed of ParC and ParE.

The protein resides in the cell membrane. It carries out the reaction ATP-dependent breakage, passage and rejoining of double-stranded DNA.. In terms of biological role, topoisomerase IV is essential for chromosome segregation. It relaxes supercoiled DNA. Performs the decatenation events required during the replication of a circular DNA molecule. This is DNA topoisomerase 4 subunit A from Streptococcus pyogenes serotype M3 (strain SSI-1).